We begin with the raw amino-acid sequence, 200 residues long: Peptidyl-tRNA hydrolase (200 aa).

Position 23 (Y23) interacts with tRNA. H28 functions as the Proton acceptor in the catalytic mechanism. TRNA-binding residues include F79, N81, and N127.

The protein belongs to the PTH family. In terms of assembly, monomer.

It is found in the cytoplasm. It carries out the reaction an N-acyl-L-alpha-aminoacyl-tRNA + H2O = an N-acyl-L-amino acid + a tRNA + H(+). Functionally, hydrolyzes ribosome-free peptidyl-tRNAs (with 1 or more amino acids incorporated), which drop off the ribosome during protein synthesis, or as a result of ribosome stalling. Its function is as follows. Catalyzes the release of premature peptidyl moieties from peptidyl-tRNA molecules trapped in stalled 50S ribosomal subunits, and thus maintains levels of free tRNAs and 50S ribosomes. The chain is Peptidyl-tRNA hydrolase from Streptomyces coelicolor (strain ATCC BAA-471 / A3(2) / M145).